Here is a 212-residue protein sequence, read N- to C-terminus: Methylthioribulose-1-phosphate dehydratase (212 aa).

Zn(2+) contacts are provided by His-97 and His-99.

It belongs to the aldolase class II family. MtnB subfamily. In terms of assembly, homotetramer. The cofactor is Zn(2+).

It carries out the reaction 5-(methylsulfanyl)-D-ribulose 1-phosphate = 5-methylsulfanyl-2,3-dioxopentyl phosphate + H2O. Its pathway is amino-acid biosynthesis; L-methionine biosynthesis via salvage pathway; L-methionine from S-methyl-5-thio-alpha-D-ribose 1-phosphate: step 2/6. Its function is as follows. Catalyzes the dehydration of methylthioribulose-1-phosphate (MTRu-1-P) into 2,3-diketo-5-methylthiopentyl-1-phosphate (DK-MTP-1-P). The chain is Methylthioribulose-1-phosphate dehydratase from Bacillus cereus (strain B4264).